The following is a 198-amino-acid chain: Thioredoxin reductase-like selenoprotein T homolog CG3887 (198 aa).

An N-terminal signal peptide occupies residues 1–25; it reads MERLTGRNVALLVLCLCAGYALVFA. Cysteines 49 and 52 form a disulfide.

Belongs to the SelWTH family. SELT subfamily.

It carries out the reaction [thioredoxin]-dithiol + NADP(+) = [thioredoxin]-disulfide + NADPH + H(+). In terms of biological role, probably has thioredoxin reductase-like oxidoreductase activity. The polypeptide is Thioredoxin reductase-like selenoprotein T homolog CG3887 (Drosophila melanogaster (Fruit fly)).